Here is a 348-residue protein sequence, read N- to C-terminus: Benzoate 1,2-dioxygenase electron transfer component (348 aa).

One can recognise a 2Fe-2S ferredoxin-type domain in the interval 14 to 109; that stretch reads HQVALQFEDG…DAVFQIQASS (96 aa). [2Fe-2S] cluster is bound by residues Cys-51, Cys-56, Cys-59, and Cys-93. The tract at residues 111–348 is ferredoxin-reductase; it reads VCKTKIHHFE…NFLFEKFSAN (238 aa). The region spanning 116-217 is the FAD-binding FR-type domain; the sequence is IHHFEGTLAR…TGPFGSFYLR (102 aa).

This sequence belongs to the bacterial ring-hydroxylating dioxygenase ferredoxin reductase family. As to quaternary structure, this dioxygenase system consists of three proteins: the two subunits of the hydroxylase component (BenA and BenB), and an electron transfer component (BenC). It depends on FAD as a cofactor. [2Fe-2S] cluster is required as a cofactor.

The catalysed reaction is 2 reduced [2Fe-2S]-[ferredoxin] + NAD(+) + H(+) = 2 oxidized [2Fe-2S]-[ferredoxin] + NADH. Its pathway is xenobiotic degradation; toluene degradation. Electron transfer component of benzoate 1,2-dioxygenase system. The polypeptide is Benzoate 1,2-dioxygenase electron transfer component (benC) (Acinetobacter baylyi (strain ATCC 33305 / BD413 / ADP1)).